The sequence spans 328 residues: Biotin synthase (328 aa).

The 230-residue stretch at 53-282 folds into the Radical SAM core domain; that stretch reads FHGNRVDLCA…ATTIRYAGGR (230 aa). 3 residues coordinate [4Fe-4S] cluster: Cys71, Cys75, and Cys78. The [2Fe-2S] cluster site is built by Ser115, Cys147, Cys207, and Arg277.

It belongs to the radical SAM superfamily. Biotin synthase family. In terms of assembly, homodimer. [4Fe-4S] cluster serves as cofactor. [2Fe-2S] cluster is required as a cofactor.

It carries out the reaction (4R,5S)-dethiobiotin + (sulfur carrier)-SH + 2 reduced [2Fe-2S]-[ferredoxin] + 2 S-adenosyl-L-methionine = (sulfur carrier)-H + biotin + 2 5'-deoxyadenosine + 2 L-methionine + 2 oxidized [2Fe-2S]-[ferredoxin]. Its pathway is cofactor biosynthesis; biotin biosynthesis; biotin from 7,8-diaminononanoate: step 2/2. Functionally, catalyzes the conversion of dethiobiotin (DTB) to biotin by the insertion of a sulfur atom into dethiobiotin via a radical-based mechanism. The chain is Biotin synthase from Desulforudis audaxviator (strain MP104C).